The primary structure comprises 472 residues: Putative F-box/LRR-repeat protein At5g54820 (472 aa).

The 49-residue stretch at 6 to 54 (QDRLSSLPDILLIMIISFLPLKECVRTSVLSKRWRYLCLETTNLSFKES) folds into the F-box domain. 6 LRR repeats span residues 58-87 (NPDITDAEYSRIVAYRSFFCSVDKWVSITQ), 135-164 (NGDISYRHFMYTLPKSVYSLTTLESLKIYG), 183-208 (IGWVRLENLHSLLSKSPSLQSLSIKN), 225-250 (VIEHSDFSYMQCAFELPRIHSFKYSG), 283-308 (SSRISGEVISRIINDLRAAETLTVCP), and 338-363 (MHTKEFNGIILLLNNCPNLETLGFDI).

The chain is Putative F-box/LRR-repeat protein At5g54820 from Arabidopsis thaliana (Mouse-ear cress).